The sequence spans 651 residues: Ion-translocating oxidoreductase complex subunit C (651 aa).

4Fe-4S ferredoxin-type domains follow at residues 368–398 (EYAE…QQLY) and 408–437 (KSEE…IQYF). [4Fe-4S] cluster is bound by residues Cys-378, Cys-381, Cys-384, Cys-388, Cys-417, Cys-420, Cys-423, and Cys-427. 2 stretches are compositionally biased toward basic and acidic residues: residues 465–477 (QARM…ERKA) and 485–513 (ARRE…KANE). 2 disordered regions span residues 465–565 (QARM…QPTD) and 583–624 (LAQA…DPKK). 2 stretches are compositionally biased toward polar residues: residues 554–564 (VENQEQQTQPT) and 587–600 (NSTS…QTAE). Residues 602 to 614 (EVEKTKSAVEKTQ) show a composition bias toward basic and acidic residues.

This sequence belongs to the 4Fe4S bacterial-type ferredoxin family. RnfC subfamily. As to quaternary structure, the complex is composed of six subunits: RnfA, RnfB, RnfC, RnfD, RnfE and RnfG. [4Fe-4S] cluster is required as a cofactor.

It is found in the cell inner membrane. Its function is as follows. Part of a membrane-bound complex that couples electron transfer with translocation of ions across the membrane. The protein is Ion-translocating oxidoreductase complex subunit C of Haemophilus influenzae (strain PittEE).